The sequence spans 599 residues: MLSDLKQNLRSYFSSRILILALAIASIISVCTTFYVISLEAKNFSTIIGFLLIDLAIFLILGILLTQKFFTKNNDNDSSKLQNRIVIAFSLVAAIPTIIVSVFSVYFFNLSVKAWFDKKISTVLDQSVIVAETYIAEHKVQLKETALAVAEDLSDMYYDLIHNPALFTKTLNTEADMRSLDEAIVLNKSTNTIVANSYLSFSLSFATIPAHLIKKADLGEPVEVKSDPTTIRMLIKLKEYNDVYLLVGRLVDNKIIDHIDATNGAAAEYNSLKNEIDNIQIKFSIMFIFIALLLLFVAINFGVLFTAKIVKPIKKLVTATDKVKDGDLTVQVPENEVDKDEIGTLYAAFNRMIKQLSRQQRDLVIAQRAMAWSDVAKKVAHEIKNPLTPILLASERLLKKFSSEINEKSEFESYLKMIIRHTNDIKNIVSEFVLFARLPAPKFTKSELVYLVKHIIEARKLLNDNIVYTYDSNVDQFDFMCDATQINQVMINVLKNAEESIEGQEFGKIDVILDAKDDFISVIVMDNGKGFPPELIGKATESYVTTSSKGMGVGLAIVKRIVEEHCGVLDIANREDEGAIIDIKFDLKELHLKVRRSGG.

The next 4 helical transmembrane spans lie at 17–37 (ILIL…FYVI), 44–64 (FSTI…LGIL), 85–105 (IVIA…VFSV), and 285–305 (IMFI…GVLF). An HAMP domain is found at 307–361 (AKIVKPIKKLVTATDKVKDGDLTVQVPENEVDKDEIGTLYAAFNRMIKQLSRQQR). In terms of domain architecture, Histidine kinase spans 378–589 (KVAHEIKNPL…IIDIKFDLKE (212 aa)). Position 381 is a phosphohistidine; by autocatalysis (His-381).

It is found in the cell membrane. The enzyme catalyses ATP + protein L-histidine = ADP + protein N-phospho-L-histidine.. Member of the two-component regulatory system RP614/RP562. The polypeptide is Putative sensor histidine kinase NtrY-like (Rickettsia prowazekii (strain Madrid E)).